A 68-amino-acid polypeptide reads, in one-letter code: Riparin-1.5 amide (68 aa).

An N-terminal signal peptide occupies residues 1–15; it reads MKIIVVLAVLMLVSA. Residues 16–41 constitute a propeptide that is removed on maturation; it reads QVCLVSAAEMGHSSDNELSSRDLVKR. An intrachain disulfide couples cysteine 47 to cysteine 53. A Cysteine amide modification is found at cysteine 53. A propeptide spanning residues 57–68 is cleaved from the precursor; it reads SIESSEGANGGE.

Expressed by the skin glands.

The protein resides in the secreted. The protein is Riparin-1.5 amide of Crinia riparia (Streambank froglet).